We begin with the raw amino-acid sequence, 494 residues long: Probable cytosol aminopeptidase (494 aa).

Lys260 and Asp265 together coordinate Mn(2+). Residue Lys272 is part of the active site. 3 residues coordinate Mn(2+): Asp283, Asp342, and Glu344. Residue Arg346 is part of the active site.

This sequence belongs to the peptidase M17 family. It depends on Mn(2+) as a cofactor.

Its subcellular location is the cytoplasm. It catalyses the reaction Release of an N-terminal amino acid, Xaa-|-Yaa-, in which Xaa is preferably Leu, but may be other amino acids including Pro although not Arg or Lys, and Yaa may be Pro. Amino acid amides and methyl esters are also readily hydrolyzed, but rates on arylamides are exceedingly low.. The enzyme catalyses Release of an N-terminal amino acid, preferentially leucine, but not glutamic or aspartic acids.. Functionally, presumably involved in the processing and regular turnover of intracellular proteins. Catalyzes the removal of unsubstituted N-terminal amino acids from various peptides. This chain is Probable cytosol aminopeptidase, found in Bacillus cereus (strain ATCC 14579 / DSM 31 / CCUG 7414 / JCM 2152 / NBRC 15305 / NCIMB 9373 / NCTC 2599 / NRRL B-3711).